Here is a 112-residue protein sequence, read N- to C-terminus: Probable prefoldin subunit 1 (112 aa).

Belongs to the prefoldin subunit beta family. Heterohexamer of two PFD-alpha type and four PFD-beta type subunits.

In terms of biological role, binds specifically to cytosolic chaperonin (c-CPN) and transfers target proteins to it. Binds to nascent polypeptide chain and promotes folding in an environment in which there are many competing pathways for nonnative proteins. The chain is Probable prefoldin subunit 1 from Schizosaccharomyces pombe (strain 972 / ATCC 24843) (Fission yeast).